Consider the following 217-residue polypeptide: 7-cyano-7-deazaguanine synthase (217 aa).

10–20 (FSGGQDSTTCL) contacts ATP. The Zn(2+) site is built by Cys185, Cys194, Cys197, and Cys200.

Belongs to the QueC family. In terms of assembly, homodimer. Zn(2+) serves as cofactor.

The enzyme catalyses 7-carboxy-7-deazaguanine + NH4(+) + ATP = 7-cyano-7-deazaguanine + ADP + phosphate + H2O + H(+). The protein operates within purine metabolism; 7-cyano-7-deazaguanine biosynthesis. In terms of biological role, catalyzes the ATP-dependent conversion of 7-carboxy-7-deazaguanine (CDG) to 7-cyano-7-deazaguanine (preQ(0)). The sequence is that of 7-cyano-7-deazaguanine synthase from Streptococcus thermophilus (strain CNRZ 1066).